The chain runs to 303 residues: Mycothiol acetyltransferase (303 aa).

2 consecutive N-acetyltransferase domains span residues 6-134 and 154-303; these read TSLA…VEGD and NEAY…QSSS. Glu-37 contacts 1D-myo-inositol 2-(L-cysteinylamino)-2-deoxy-alpha-D-glucopyranoside. Acetyl-CoA is bound by residues 75–77 and 83–88; these read VVV and RQGYGS. The 1D-myo-inositol 2-(L-cysteinylamino)-2-deoxy-alpha-D-glucopyranoside site is built by Glu-180, Lys-221, and Glu-233. Residues 237-239 and 244-250 each bind acetyl-CoA; these read VGL and RRRGLGD. Tyr-271 is a binding site for 1D-myo-inositol 2-(L-cysteinylamino)-2-deoxy-alpha-D-glucopyranoside. Position 276 to 281 (276 to 281) interacts with acetyl-CoA; sequence NESARR.

It belongs to the acetyltransferase family. MshD subfamily. Monomer.

The enzyme catalyses 1D-myo-inositol 2-(L-cysteinylamino)-2-deoxy-alpha-D-glucopyranoside + acetyl-CoA = mycothiol + CoA + H(+). Functionally, catalyzes the transfer of acetyl from acetyl-CoA to desacetylmycothiol (Cys-GlcN-Ins) to form mycothiol. The protein is Mycothiol acetyltransferase of Corynebacterium diphtheriae (strain ATCC 700971 / NCTC 13129 / Biotype gravis).